Consider the following 498-residue polypeptide: ATP synthase subunit beta, chloroplastic (498 aa).

Residue 172–179 (GGAGVGKT) coordinates ATP.

This sequence belongs to the ATPase alpha/beta chains family. F-type ATPases have 2 components, CF(1) - the catalytic core - and CF(0) - the membrane proton channel. CF(1) has five subunits: alpha(3), beta(3), gamma(1), delta(1), epsilon(1). CF(0) has four main subunits: a(1), b(1), b'(1) and c(9-12).

The protein localises to the plastid. Its subcellular location is the chloroplast thylakoid membrane. The catalysed reaction is ATP + H2O + 4 H(+)(in) = ADP + phosphate + 5 H(+)(out). Its function is as follows. Produces ATP from ADP in the presence of a proton gradient across the membrane. The catalytic sites are hosted primarily by the beta subunits. The chain is ATP synthase subunit beta, chloroplastic from Phormium tenax (New Zealand flax).